We begin with the raw amino-acid sequence, 212 residues long: Deoxyribose-phosphate aldolase (212 aa).

D90 acts as the Proton donor/acceptor in catalysis. K151 serves as the catalytic Schiff-base intermediate with acetaldehyde. The active-site Proton donor/acceptor is the K176.

This sequence belongs to the DeoC/FbaB aldolase family. DeoC type 1 subfamily.

Its subcellular location is the cytoplasm. The enzyme catalyses 2-deoxy-D-ribose 5-phosphate = D-glyceraldehyde 3-phosphate + acetaldehyde. It functions in the pathway carbohydrate degradation; 2-deoxy-D-ribose 1-phosphate degradation; D-glyceraldehyde 3-phosphate and acetaldehyde from 2-deoxy-alpha-D-ribose 1-phosphate: step 2/2. Catalyzes a reversible aldol reaction between acetaldehyde and D-glyceraldehyde 3-phosphate to generate 2-deoxy-D-ribose 5-phosphate. The sequence is that of Deoxyribose-phosphate aldolase from Halobacterium salinarum (strain ATCC 29341 / DSM 671 / R1).